The primary structure comprises 74 residues: Pelophylaxin-3 (74 aa).

Residues 1–22 (MFTLKKSLLLVFFLGTISLSLC) form the signal peptide. Positions 23–39 (EDERNADEDDGEMTEEV) are excised as a propeptide. Cys68 and Cys74 are disulfide-bonded.

Expressed by the skin glands.

It is found in the secreted. Antimicrobial peptide. The sequence is that of Pelophylaxin-3 from Pelophylax fukienensis (Fukien gold-striped pond frog).